Reading from the N-terminus, the 249-residue chain is Anti-H(O) lectin 2 (249 aa).

An N-linked (GlcNAc...) asparagine glycan is attached at Asn-118. Mn(2+) contacts are provided by Glu-130 and Asp-132. Ca(2+) is bound by residues Asp-132, Tyr-134, Asn-140, and Asp-145. Residues Asp-145 and His-148 each coordinate Mn(2+). Asn-245 is a glycosylation site (N-linked (GlcNAc...) asparagine).

This sequence belongs to the leguminous lectin family.

In terms of biological role, di-N-acetylchitobiose specific lectin. This chain is Anti-H(O) lectin 2, found in Ulex europaeus (Furze).